Reading from the N-terminus, the 464-residue chain is Citrate synthase 5, mitochondrial (464 aa).

The N-terminal 25 residues, 1-25 (MVFFRSVSAISRLRSRAVQQSSLSN), are a transit peptide targeting the mitochondrion. Active-site residues include His-300, His-346, and Asp-401.

The protein belongs to the citrate synthase family.

The protein localises to the mitochondrion matrix. The enzyme catalyses oxaloacetate + acetyl-CoA + H2O = citrate + CoA + H(+). The protein operates within carbohydrate metabolism; tricarboxylic acid cycle; isocitrate from oxaloacetate: step 1/2. The chain is Citrate synthase 5, mitochondrial (CSY5) from Arabidopsis thaliana (Mouse-ear cress).